Reading from the N-terminus, the 692-residue chain is Serine/threonine-protein kinase Nek8 (692 aa).

The Protein kinase domain maps to 4–258 (YERIRVVGRG…LSHIMAQPLC (255 aa)). ATP is bound by residues 10–18 (VGRGAFGIV) and Lys33. The Proton acceptor role is filled by Asp128. Residue Thr162 is modified to Phosphothreonine; by autocatalysis. Positions 277–301 (AEKSVAPSNTGSRTTSVRCRGIPRG) are disordered. Residues 282–293 (APSNTGSRTTSV) show a composition bias toward polar residues. RCC1 repeat units follow at residues 312–350 (SSVY…VTRS), 410–461 (GIIM…LSTE), 462–513 (RELF…LTVP), 580–631 (GDCY…IGAE), and 632–684 (SEVY…AVRS).

This sequence belongs to the protein kinase superfamily. NEK Ser/Thr protein kinase family. NIMA subfamily. As to quaternary structure, interacts with PKD2; may regulate PKD2 targeting to the cilium. Interacts with ANKS6. Component of a complex containing at least ANKS6, INVS, NEK8 and NPHP3. ANKS6 may organize complex assembly by linking INVS and NPHP3 to NEK8 and INVS may target the complex to the proximal ciliary axoneme. Interacts with ANKS3. Requires Mg(2+) as cofactor. As to expression, highest expression in thyroid, adrenal gland and skin. Low levels in spleen, colon and uterus. Overexpressed in breast tumors, with highest expression in infiltrating ductal carcinomas and moderate levels in mucinous adenocarcinoma.

It localises to the cytoplasm. Its subcellular location is the cytoskeleton. The protein localises to the cell projection. It is found in the cilium. The protein resides in the microtubule organizing center. It localises to the centrosome. Its subcellular location is the cilium axoneme. It catalyses the reaction L-seryl-[protein] + ATP = O-phospho-L-seryl-[protein] + ADP + H(+). The enzyme catalyses L-threonyl-[protein] + ATP = O-phospho-L-threonyl-[protein] + ADP + H(+). In terms of biological role, required for renal tubular integrity. May regulate local cytoskeletal structure in kidney tubule epithelial cells. May regulate ciliary biogenesis through targeting of proteins to the cilia. Plays a role in organogenesis, and is involved in the regulation of the Hippo signaling pathway. The protein is Serine/threonine-protein kinase Nek8 (NEK8) of Homo sapiens (Human).